We begin with the raw amino-acid sequence, 393 residues long: Lipid-A-disaccharide synthase (393 aa).

It belongs to the LpxB family.

It catalyses the reaction a lipid X + a UDP-2-N,3-O-bis[(3R)-3-hydroxyacyl]-alpha-D-glucosamine = a lipid A disaccharide + UDP + H(+). It participates in bacterial outer membrane biogenesis; LPS lipid A biosynthesis. Condensation of UDP-2,3-diacylglucosamine and 2,3-diacylglucosamine-1-phosphate to form lipid A disaccharide, a precursor of lipid A, a phosphorylated glycolipid that anchors the lipopolysaccharide to the outer membrane of the cell. The protein is Lipid-A-disaccharide synthase of Bordetella bronchiseptica (strain ATCC BAA-588 / NCTC 13252 / RB50) (Alcaligenes bronchisepticus).